The following is a 413-amino-acid chain: Tyrosine--tRNA ligase (413 aa).

Positions 60 to 69 (PTAPDIHIGH) match the 'HIGH' region motif. The 'KMSKS' region motif lies at 244–248 (KMSKS). Lys247 contributes to the ATP binding site. Positions 352-412 (LGIAQLLKQA…GKRRFARVTL (61 aa)) constitute an S4 RNA-binding domain.

This sequence belongs to the class-I aminoacyl-tRNA synthetase family. TyrS type 2 subfamily. As to quaternary structure, homodimer.

It is found in the cytoplasm. The enzyme catalyses tRNA(Tyr) + L-tyrosine + ATP = L-tyrosyl-tRNA(Tyr) + AMP + diphosphate + H(+). Catalyzes the attachment of tyrosine to tRNA(Tyr) in a two-step reaction: tyrosine is first activated by ATP to form Tyr-AMP and then transferred to the acceptor end of tRNA(Tyr). In Cupriavidus pinatubonensis (strain JMP 134 / LMG 1197) (Cupriavidus necator (strain JMP 134)), this protein is Tyrosine--tRNA ligase.